The following is a 390-amino-acid chain: Ribosomal RNA small subunit methyltransferase H (390 aa).

S-adenosyl-L-methionine contacts are provided by residues G47 to H49, D66, F93, D122, and Q129. The segment at S282 to Q390 is disordered. The segment covering G305–K316 has biased composition (basic and acidic residues). The segment covering S348 to S358 has biased composition (polar residues). Composition is skewed to basic and acidic residues over residues S360–L372 and S381–Q390.

It belongs to the methyltransferase superfamily. RsmH family.

The protein localises to the cytoplasm. The catalysed reaction is cytidine(1402) in 16S rRNA + S-adenosyl-L-methionine = N(4)-methylcytidine(1402) in 16S rRNA + S-adenosyl-L-homocysteine + H(+). Functionally, specifically methylates the N4 position of cytidine in position 1402 (C1402) of 16S rRNA. This is Ribosomal RNA small subunit methyltransferase H from Corynebacterium kroppenstedtii (strain DSM 44385 / JCM 11950 / CIP 105744 / CCUG 35717).